Here is a 580-residue protein sequence, read N- to C-terminus: Long-chain-fatty-acid--AMP ligase FadD28 (580 aa).

A disordered region spans residues serine 421 to proline 440.

This sequence belongs to the ATP-dependent AMP-binding enzyme family.

It catalyses the reaction holo-[mycocerosate synthase] + a long-chain fatty acid + ATP = a long-chain fatty acyl-[mycocerosate synthase] + AMP + diphosphate. The enzyme catalyses a long-chain fatty acid + ATP + H(+) = a long-chain fatty acyl-AMP + diphosphate. The catalysed reaction is holo-[mycocerosate synthase] + a long-chain fatty acyl-AMP = a long-chain fatty acyl-[mycocerosate synthase] + AMP + H(+). The protein operates within lipid metabolism; fatty acid biosynthesis. Involved in the biosynthesis of phthiocerol dimycocerosate (PDIM), a cell wall-associated lipid found only in pathogenic mycobacteria. Catalyzes the activation of long-chain fatty acids as acyl-adenylates (acyl-AMP), which are then transferred to the multifunctional polyketide synthase Mas for further chain extension. The chain is Long-chain-fatty-acid--AMP ligase FadD28 (fadD28) from Mycobacterium tuberculosis (strain CDC 1551 / Oshkosh).